We begin with the raw amino-acid sequence, 363 residues long: S-methylmethionine--homocysteine S-methyltransferase BHMT2 (363 aa).

Residues 11–305 (KGILERLDSG…YHIRAIAEEL (295 aa)) form the Hcy-binding domain. Zn(2+)-binding residues include C208, C290, and C291. S321 is modified (phosphoserine).

Homotetramer. The cofactor is Zn(2+). Expressed in fetal heart, lung, liver, kidney and eye.

The catalysed reaction is S-methyl-L-methionine + L-homocysteine = 2 L-methionine + H(+). It functions in the pathway amino-acid biosynthesis; L-methionine biosynthesis via de novo pathway; L-methionine from L-homocysteine (BhmT route): step 1/1. Functionally, involved in the regulation of homocysteine metabolism. Converts homocysteine to methionine using S-methylmethionine (SMM) as a methyl donor. The polypeptide is S-methylmethionine--homocysteine S-methyltransferase BHMT2 (Bhmt2) (Mus musculus (Mouse)).